The chain runs to 202 residues: Translation initiation factor 2 subunit beta (202 aa).

The TRAM domain maps to 145-202; it reads AIEEGGTYELRIDAVGSKGDGIAKIDKYTVFVPGATKGDVVKVKIKKISGNLAFSERA.

It belongs to the eIF-2-beta/eIF-5 family. As to quaternary structure, heterotrimer composed of an alpha, a beta and a gamma chain.

In terms of biological role, eIF-2 functions in the early steps of protein synthesis by forming a ternary complex with GTP and initiator tRNA. This chain is Translation initiation factor 2 subunit beta (eif2b), found in Methanosarcina mazei (strain ATCC BAA-159 / DSM 3647 / Goe1 / Go1 / JCM 11833 / OCM 88) (Methanosarcina frisia).